Consider the following 257-residue polypeptide: N-acetylglucosaminyldiphosphoundecaprenol N-acetyl-beta-D-mannosaminyltransferase (257 aa).

It belongs to the glycosyltransferase 26 family. TagA/TarA subfamily.

It carries out the reaction UDP-N-acetyl-alpha-D-mannosamine + N-acetyl-alpha-D-glucosaminyl-di-trans,octa-cis-undecaprenyl diphosphate = N-acetyl-beta-D-mannosaminyl-(1-&gt;4)-N-acetyl-alpha-D-glucosaminyl di-trans,octa-cis-undecaprenyl diphosphate + UDP + H(+). It functions in the pathway cell wall biogenesis; poly(ribitol phosphate) teichoic acid biosynthesis. Catalyzes the conversion of GlcNAc-PP-undecaprenol into ManNAc-GlcNAc-PP-undecaprenol, the first committed lipid intermediate in the de novo synthesis of teichoic acid. The sequence is that of N-acetylglucosaminyldiphosphoundecaprenol N-acetyl-beta-D-mannosaminyltransferase from Bacillus spizizenii (strain ATCC 23059 / NRRL B-14472 / W23) (Bacillus subtilis subsp. spizizenii).